A 434-amino-acid chain; its full sequence is CCA tRNA nucleotidyltransferase 1, mitochondrial (434 aa).

A mitochondrion-targeting transit peptide spans 1 to 41 (MQSVLYPWHRQVLRCSWSRLCLLKRYLFTMKLQSPEFQSLF). 2 residues coordinate ATP: Gly-64 and Arg-67. 2 residues coordinate CTP: Gly-64 and Arg-67. The Mg(2+) site is built by Asp-77 and Asp-79. ATP-binding residues include Arg-151, Asp-194, Arg-197, Arg-200, and Arg-203. The CTP site is built by Arg-151, Asp-194, Arg-197, Arg-200, and Arg-203. Ser-400 carries the phosphoserine modification. The residue at position 402 (Lys-402) is an N6-acetyllysine.

This sequence belongs to the tRNA nucleotidyltransferase/poly(A) polymerase family. In terms of assembly, monomer, and homodimer. It depends on Mg(2+) as a cofactor.

The protein resides in the mitochondrion. The protein localises to the cytoplasm. It localises to the nucleus. The catalysed reaction is a tRNA precursor + 2 CTP + ATP = a tRNA with a 3' CCA end + 3 diphosphate. It catalyses the reaction a tRNA with a 3' CCA end + 2 CTP + ATP = a tRNA with a 3' CCACCA end + 3 diphosphate. Nucleotidyltransferase that catalyzes the addition and repair of the essential 3'-terminal CCA sequence in tRNAs, which is necessary for the attachment of amino acids to the 3' terminus of tRNA molecules, using CTP and ATP as substrates. tRNA 3'-terminal CCA addition is required both for tRNA processing and repair. Promotes tRNA repair and recycling downstream of the ribosome-associated quality control (RQC) pathway by mediating addition of the tRNA 3'-terminal CCA following cleavage by ANKZF1 and repair by ELAC1. Also involved in tRNA surveillance by mediating tandem CCA addition to generate a CCACCA at the 3' terminus of unstable tRNAs and tRNA-like transcripts. While stable tRNAs receive only 3'-terminal CCA, unstable tRNAs beginning with GG are marked with CCACCA and rapidly degraded. The structural flexibility of RNA controls the choice between CCA versus CCACCA addition: following the first CCA addition cycle, nucleotide-binding to the active site triggers a clockwise screw motion, producing torque on the RNA. This ejects stable RNAs, whereas unstable RNAs are refolded while bound to the enzyme and subjected to a second CCA catalytic cycle. This chain is CCA tRNA nucleotidyltransferase 1, mitochondrial (Trnt1), found in Mus musculus (Mouse).